Reading from the N-terminus, the 475-residue chain is Sulfate adenylyltransferase subunit 1 (475 aa).

Residues 25–239 (KSLLRFLTCG…EVLETVEIQR (215 aa)) form the tr-type G domain. The segment at 34 to 41 (GSVDDGKS) is G1. 34–41 (GSVDDGKS) serves as a coordination point for GTP. The tract at residues 92–96 (GITID) is G2. The segment at 113 to 116 (DTPG) is G3. GTP is bound by residues 113–117 (DTPGH) and 168–171 (NKMD). A G4 region spans residues 168–171 (NKMD). A G5 region spans residues 206–208 (SAL).

Belongs to the TRAFAC class translation factor GTPase superfamily. Classic translation factor GTPase family. CysN/NodQ subfamily. In terms of assembly, heterodimer composed of CysD, the smaller subunit, and CysN.

The catalysed reaction is sulfate + ATP + H(+) = adenosine 5'-phosphosulfate + diphosphate. Its pathway is sulfur metabolism; hydrogen sulfide biosynthesis; sulfite from sulfate: step 1/3. Its function is as follows. With CysD forms the ATP sulfurylase (ATPS) that catalyzes the adenylation of sulfate producing adenosine 5'-phosphosulfate (APS) and diphosphate, the first enzymatic step in sulfur assimilation pathway. APS synthesis involves the formation of a high-energy phosphoric-sulfuric acid anhydride bond driven by GTP hydrolysis by CysN coupled to ATP hydrolysis by CysD. The polypeptide is Sulfate adenylyltransferase subunit 1 (Escherichia coli (strain 55989 / EAEC)).